The sequence spans 238 residues: Probable transcriptional regulatory protein HH_1604 (238 aa).

The protein belongs to the TACO1 family.

The protein resides in the cytoplasm. This Helicobacter hepaticus (strain ATCC 51449 / 3B1) protein is Probable transcriptional regulatory protein HH_1604.